The sequence spans 798 residues: Bromodomain-containing protein 2 (798 aa).

Residue Met1 is modified to N-acetylmethionine. The disordered stretch occupies residues Met1–Leu21. Thr6 is subject to Phosphothreonine. Ser36 carries the phosphoserine modification. Residues Leu53–Gly72 form a disordered region. In terms of domain architecture, Bromo 1 spans Arg73–Met179. The a protein site is built by Asp111, Tyr154, Asn155, Lys156, Asp159, and Asp160. Disordered stretches follow at residues Pro267–Gln348, Asp454–Lys645, and Lys736–Gly798. Residues Thr284 to Ser297 show a composition bias toward low complexity. 3 positions are modified to phosphoserine: Ser297, Ser300, and Ser304. A compositionally biased stretch (basic and acidic residues) spans Met315–Pro331. The region spanning Gly343 to Met452 is the Bromo 2 domain. Over residues Ser480 to Glu512 the composition is skewed to acidic residues. A compositionally biased stretch (basic residues) spans Lys542–Arg564. Positions Lys553–Lys557 match the Nuclear localization signal motif. In terms of domain architecture, NET spans Asp630 to Pro712. Residue Ser631 is modified to Phosphoserine. Residues Ser772 to Thr792 are compositionally biased toward low complexity.

This sequence belongs to the BET family. As to quaternary structure, homodimer. Interacts with E2F1. Interacts with (acetylated) STAT3; promoting STAT3 recruitment to chromatin. Interacts with CTCF; promoting BRD2 recruitment to chromatin. Predominantly expressed in the testis, followed by ovary, placenta, embryo and to a lower extent in somatic tissues.

The protein localises to the nucleus. The protein resides in the chromosome. In terms of biological role, chromatin reader protein that specifically recognizes and binds histone H4 acetylated at 'Lys-5' and 'Lys-12' (H4K5ac and H4K12ac, respectively), thereby controlling gene expression and remodeling chromatin structures. Recruits transcription factors and coactivators to target gene sites, and activates RNA polymerase II machinery for transcriptional elongation. Plays a key role in genome compartmentalization via its association with CTCF and cohesin: recruited to chromatin by CTCF and promotes formation of topologically associating domains (TADs) via its ability to bind acetylated histones, contributing to CTCF boundary formation and enhancer insulation. Also recognizes and binds acetylated non-histone proteins, such as STAT3. Involved in inflammatory response by regulating differentiation of naive CD4(+) T-cells into T-helper Th17: recognizes and binds STAT3 acetylated at 'Lys-87', promoting STAT3 recruitment to chromatin. In addition to acetylated lysines, also recognizes and binds lysine residues on histones that are both methylated and acetylated on the same side chain to form N6-acetyl-N6-methyllysine (Kacme), an epigenetic mark of active chromatin associated with increased transcriptional initiation. Specifically binds histone H4 acetyl-methylated at 'Lys-5' and 'Lys-12' (H4K5acme and H4K12acme, respectively). The protein is Bromodomain-containing protein 2 of Mus musculus (Mouse).